The chain runs to 82 residues: Immediate early response 3-interacting protein 1 (82 aa).

Helical transmembrane passes span 2–22 (AFTL…VAVL) and 62–82 (VMRV…LLFG).

The protein belongs to the YOS1 family.

The protein resides in the endoplasmic reticulum membrane. Regulator of endoplasmic reticulum secretion that acts as a key determinant of brain size. Required for secretion of extracellular matrix proteins. Required for correct brain development by depositing sufficient extracellular matrix proteins for tissue integrity and the proliferation of neural progenitors. Acts as a regulator of the unfolded protein response (UPR). This Xenopus laevis (African clawed frog) protein is Immediate early response 3-interacting protein 1.